Consider the following 589-residue polypeptide: Pentalenolactone D synthase (589 aa).

FAD contacts are provided by residues 60–61, 82–83, 90–91, 102–103, Y108, V152, and M491; these read IG, DE, TW, and DV.

This sequence belongs to the FAD-binding monooxygenase family. FAD serves as cofactor.

It catalyses the reaction 1-deoxy-11-oxopentalenate + NADPH + O2 + H(+) = pentalenolactone D + NADP(+) + H2O. The protein operates within antibiotic biosynthesis; pentalenolactone biosynthesis. Its function is as follows. Catalyzes the flavin-dependent Baeyer-Villiger oxidation of 1-deoxy-11-oxopentalenic acid to pentalenolactone D in the biosynthesis of pentalenolactone antibiotic. In Streptomyces arenae, this protein is Pentalenolactone D synthase (pntE).